The primary structure comprises 317 residues: MPVQGSQRRLLGSLNSTPTATPHLGLAANQTGARCLEVSIPDGLFLSLGLVSLVENVLVVTAIAKNRNLHSPMYCFICCLALSDLLVSGSNMLETAVTLLLEAGALAARAAVVQQLDNVIDVITCSSMLSSLCFLGAIAVDRYISIFYALRYHSIVTLPRARRAVAAIWVASVLFSMLFIAYYDHAAVLLCLVVFFLAMLVLMAVLYVHMLARACQHAQGIARLHKRQRPAHQGFGLKGAATLTILLGIFFLCWGPFFLHLTLIVLCPQHPTCSCIFKNFNLFLALIICNAIIDPLIYAFRSQELRRTLKEVLLCSW.

The Extracellular portion of the chain corresponds to 1–37 (MPVQGSQRRLLGSLNSTPTATPHLGLAANQTGARCLE). The N-linked (GlcNAc...) asparagine glycan is linked to N29. Residues 38–63 (VSIPDGLFLSLGLVSLVENVLVVTAI) traverse the membrane as a helical segment. Over 64–72 (AKNRNLHSP) the chain is Cytoplasmic. The chain crosses the membrane as a helical span at residues 73 to 93 (MYCFICCLALSDLLVSGSNML). Over 94–118 (ETAVTLLLEAGALAARAAVVQQLDN) the chain is Extracellular. A helical membrane pass occupies residues 119–140 (VIDVITCSSMLSSLCFLGAIAV). Residues 141 to 163 (DRYISIFYALRYHSIVTLPRARR) are Cytoplasmic-facing. The chain crosses the membrane as a helical span at residues 164-183 (AVAAIWVASVLFSMLFIAYY). At 184 to 191 (DHAAVLLC) the chain is on the extracellular side. A helical transmembrane segment spans residues 192–211 (LVVFFLAMLVLMAVLYVHML). The Cytoplasmic portion of the chain corresponds to 212 to 240 (ARACQHAQGIARLHKRQRPAHQGFGLKGA). A helical membrane pass occupies residues 241-266 (ATLTILLGIFFLCWGPFFLHLTLIVL). The Extracellular portion of the chain corresponds to 267–279 (CPQHPTCSCIFKN). A helical membrane pass occupies residues 280–300 (FNLFLALIICNAIIDPLIYAF). The Cytoplasmic portion of the chain corresponds to 301 to 317 (RSQELRRTLKEVLLCSW). C315 carries the S-palmitoyl cysteine lipid modification.

It belongs to the G-protein coupled receptor 1 family. In terms of assembly, interacts with MGRN1, but does not undergo MGRN1-mediated ubiquitination; this interaction competes with GNAS-binding and thus inhibits agonist-induced cAMP production. Interacts with OPN3; the interaction results in a decrease in MC1R-mediated cAMP signaling and ultimately a decrease in melanin production in melanocytes.

The protein localises to the cell membrane. Its function is as follows. Receptor for MSH (alpha, beta and gamma) and ACTH. The activity of this receptor is mediated by G proteins which activate adenylate cyclase. Mediates melanogenesis, the production of eumelanin (black/brown) and phaeomelanin (red/yellow), via regulation of cAMP signaling in melanocytes. This chain is Melanocyte-stimulating hormone receptor (MC1R), found in Miopithecus talapoin (Angolan talapoin).